The following is an 85-amino-acid chain: Small ribosomal subunit protein bS18 (85 aa).

This sequence belongs to the bacterial ribosomal protein bS18 family. In terms of assembly, part of the 30S ribosomal subunit. Forms a tight heterodimer with protein bS6.

Binds as a heterodimer with protein bS6 to the central domain of the 16S rRNA, where it helps stabilize the platform of the 30S subunit. The protein is Small ribosomal subunit protein bS18 of Solidesulfovibrio magneticus (strain ATCC 700980 / DSM 13731 / RS-1) (Desulfovibrio magneticus).